Here is a 732-residue protein sequence, read N- to C-terminus: Polyribonucleotide nucleotidyltransferase (732 aa).

Residues D516 and D522 each contribute to the Mg(2+) site. The region spanning P582–I642 is the KH domain. The region spanning G659–R726 is the S1 motif domain.

This sequence belongs to the polyribonucleotide nucleotidyltransferase family. The cofactor is Mg(2+).

The protein localises to the cytoplasm. The catalysed reaction is RNA(n+1) + phosphate = RNA(n) + a ribonucleoside 5'-diphosphate. Functionally, involved in mRNA degradation. Catalyzes the phosphorolysis of single-stranded polyribonucleotides processively in the 3'- to 5'-direction. The chain is Polyribonucleotide nucleotidyltransferase from Nitratiruptor sp. (strain SB155-2).